The chain runs to 198 residues: NADH-quinone oxidoreductase subunit I (198 aa).

2 4Fe-4S ferredoxin-type domains span residues 42–72 and 88–117; these read LNRW…VEGA and RVYE…MTND. C52, C55, C58, C62, C97, C100, C103, and C107 together coordinate [4Fe-4S] cluster. Positions 137-198 are disordered; the sequence is APLKEGMEQP…DTQHKDEEAA (62 aa). Residues 182–198 are compositionally biased toward basic and acidic residues; it reads AHRDDDNDTQHKDEEAA.

The protein belongs to the complex I 23 kDa subunit family. NDH-1 is composed of 14 different subunits. Subunits NuoA, H, J, K, L, M, N constitute the membrane sector of the complex. The cofactor is [4Fe-4S] cluster.

It is found in the cell membrane. The enzyme catalyses a quinone + NADH + 5 H(+)(in) = a quinol + NAD(+) + 4 H(+)(out). Functionally, NDH-1 shuttles electrons from NADH, via FMN and iron-sulfur (Fe-S) centers, to quinones in the respiratory chain. The immediate electron acceptor for the enzyme in this species is believed to be ubiquinone. Couples the redox reaction to proton translocation (for every two electrons transferred, four hydrogen ions are translocated across the cytoplasmic membrane), and thus conserves the redox energy in a proton gradient. This Cutibacterium acnes (strain DSM 16379 / KPA171202) (Propionibacterium acnes) protein is NADH-quinone oxidoreductase subunit I.